The chain runs to 157 residues: Pyruvoyl-dependent arginine decarboxylase 2 (157 aa).

At Ser43 the chain carries Pyruvic acid (Ser).

This sequence belongs to the PdaD family. Requires pyruvate as cofactor.

It carries out the reaction L-arginine + H(+) = agmatine + CO2. The protein is Pyruvoyl-dependent arginine decarboxylase 2 (pdaD2) of Archaeoglobus fulgidus (strain ATCC 49558 / DSM 4304 / JCM 9628 / NBRC 100126 / VC-16).